Here is a 75-residue protein sequence, read N- to C-terminus: Calhepatin (75 aa).

Position 1 is an N-acetylserine (Ser-1). EF-hand domains follow at residues 2–37 (ADEQKLRERFEALDKDKSGTLSVDELYEGVHAVHPK) and 38–73 (VSRNDIVKIIEKVDTNKDGQVSWQEFIEAFKRLADL). Asp-15, Asp-17, Ser-19, Thr-21, Glu-26, Asp-51, Asn-53, Asp-55, Gln-57, and Glu-62 together coordinate Ca(2+).

Monomer and homodimer. As to expression, liver, and to a much lower level intestine.

Its function is as follows. Binds both calcium and copper, but not zinc. May be involved in calcium signal transduction. This is Calhepatin from Lepidosiren paradoxus (South American lungfish).